Consider the following 131-residue polypeptide: MKKHGVLNSEIAAVLASLGHTDTIVIADCGLPIPDGVKRIDLAVEIGKPSFLDVLQVVADDMAIEKVMLAEEVIINNAEVNKEVEMRLIEPAFEYVSHKEFKEHTKRAKAIIRTGEATPYANVILHAGVIF.

His-20 acts as the Proton donor in catalysis. Residues Asp-28, His-98, and Tyr-120–Asn-122 each bind substrate.

This sequence belongs to the RbsD / FucU family. RbsD subfamily. Homodecamer.

It is found in the cytoplasm. The enzyme catalyses beta-D-ribopyranose = beta-D-ribofuranose. The protein operates within carbohydrate metabolism; D-ribose degradation; D-ribose 5-phosphate from beta-D-ribopyranose: step 1/2. In terms of biological role, catalyzes the interconversion of beta-pyran and beta-furan forms of D-ribose. The sequence is that of D-ribose pyranase from Bacillus mycoides (strain KBAB4) (Bacillus weihenstephanensis).